A 469-amino-acid chain; its full sequence is MDETSPLVSPDRDQTEYSYQSQCSPGATVPLSPNGRFSALPGVVVRIPGTATSCGSAASGPSPPGSPCDQERQPLLERSQTRAAAAQAEREMNKFPDDPAFAEVVKKAEKAIMRDILPERISQGSSGSYFVKDEQGEIIAVFKPKNEEPYGQLNPKWTKWLQKLCCPCCFGRDCLVLNQGYLSEAGASLVDQKLDLNIVPRTKVVFLASETFNYSAIDRVKSRGKRLALEKVPKVGQRFNRIGLPPKVGSFQIFVKSYKDADYWLRRFEADPLPENTNRQLQLQFERLVVLDYIIRNTDRGNDNWLIKYDCPMDSASARDDWVMVKEPVIKIAAIDNGLAFPLKHPDSWRAYPFYWAWLPQAKIQFSQEIKDLILPKISDPNFVKDLEEDLYELFKKDQGFDRGQFRKQIAVMRGQILNLTQAMKDGKSPLQLVQTPPVIVETARSHQKSTSESYTQSFQSRKPFFSWW.

Disordered regions lie at residues 1–30 and 50–72; these read MDET…ATVP and TATS…DQER. Positions 16–25 are enriched in polar residues; that stretch reads EYSYQSQCSP. The segment covering 50–60 has biased composition (low complexity); that stretch reads TATSCGSAASG. Positions 115–443 constitute a PI3K/PI4K catalytic domain; the sequence is DILPERISQG…VQTPPVIVET (329 aa). The tract at residues 121–127 is G-loop; that stretch reads ISQGSSG. ATP-binding positions include 122 to 128 and Lys143; that span reads SQGSSGS. The tract at residues 148–150 is important for substrate binding; sequence EPY. The important for interaction with membranes stretch occupies residues 156-169; the sequence is KWTKWLQKLCCPCC. 4 S-palmitoyl cysteine lipidation sites follow: Cys165, Cys166, Cys168, and Cys169. An ATP-binding site is contributed by 252–255; that stretch reads QIFV. The tract at residues 259–267 is important for interaction with membranes; it reads KDADYWLRR. The tract at residues 296-304 is catalytic loop; that stretch reads RNTDRGNDN. The activation loop stretch occupies residues 334 to 354; it reads AIDNGLAFPLKHPDSWRAYPF. ATP is bound at residue Asp336. The interval 349-358 is important for interaction with membranes; the sequence is WRAYPFYWAW.

Belongs to the PI3/PI4-kinase family. Type II PI4K subfamily.

The protein localises to the golgi apparatus. It localises to the trans-Golgi network membrane. The protein resides in the membrane raft. Its subcellular location is the endosome. It is found in the endosome membrane. The protein localises to the cytoplasmic vesicle. It localises to the cell projection. The protein resides in the dendrite. Its subcellular location is the presynaptic cell membrane. It is found in the synapse. The protein localises to the synaptosome. It localises to the mitochondrion. The protein resides in the membrane. Its subcellular location is the cell membrane. It is found in the perikaryon. The protein localises to the neuron projection. It carries out the reaction a 1,2-diacyl-sn-glycero-3-phospho-(1D-myo-inositol) + ATP = a 1,2-diacyl-sn-glycero-3-phospho-(1D-myo-inositol 4-phosphate) + ADP + H(+). Its function is as follows. Membrane-bound phosphatidylinositol-4 kinase (PI4-kinase) that catalyzes the phosphorylation of phosphatidylinositol (PI) to phosphatidylinositol 4-phosphate (PI4P), a lipid that plays important roles in endocytosis, Golgi function, protein sorting and membrane trafficking. Besides, phosphorylation of phosphatidylinositol (PI) to phosphatidylinositol 4-phosphate (PI4P) is the first committed step in the generation of phosphatidylinositol 4,5-bisphosphate (PIP2), a precursor of the second messenger inositol 1,4,5-trisphosphate (InsP3). This is Phosphatidylinositol 4-kinase type 2-alpha (pi4k2a) from Xenopus laevis (African clawed frog).